Consider the following 406-residue polypeptide: Cysteine desulfurase IscS (406 aa).

Residues 75-76, Asn155, Gln183, and 203-205 contribute to the pyridoxal 5'-phosphate site; these read AT and SSH. Lys206 is subject to N6-(pyridoxal phosphate)lysine. Residue Thr243 coordinates pyridoxal 5'-phosphate. The active-site Cysteine persulfide intermediate is the Cys330. Cys330 contacts [2Fe-2S] cluster.

It belongs to the class-V pyridoxal-phosphate-dependent aminotransferase family. NifS/IscS subfamily. In terms of assembly, homodimer. Forms a heterotetramer with IscU, interacts with other sulfur acceptors. The cofactor is pyridoxal 5'-phosphate.

It is found in the cytoplasm. The enzyme catalyses (sulfur carrier)-H + L-cysteine = (sulfur carrier)-SH + L-alanine. It participates in cofactor biosynthesis; iron-sulfur cluster biosynthesis. Functionally, master enzyme that delivers sulfur to a number of partners involved in Fe-S cluster assembly, tRNA modification or cofactor biosynthesis. Catalyzes the removal of elemental sulfur atoms from cysteine to produce alanine. Functions as a sulfur delivery protein for Fe-S cluster synthesis onto IscU, an Fe-S scaffold assembly protein, as well as other S acceptor proteins. This Haemophilus ducreyi (strain 35000HP / ATCC 700724) protein is Cysteine desulfurase IscS.